Reading from the N-terminus, the 158-residue chain is Large ribosomal subunit protein bL19 (158 aa).

Residues 1–35 (MTADSKDTSMSEDNTETATAIENSSAMVTDVTSKS) form a disordered region. Over residues 16 to 35 (ETATAIENSSAMVTDVTSKS) the composition is skewed to polar residues.

Belongs to the bacterial ribosomal protein bL19 family.

This protein is located at the 30S-50S ribosomal subunit interface and may play a role in the structure and function of the aminoacyl-tRNA binding site. The protein is Large ribosomal subunit protein bL19 of Prochlorococcus marinus (strain MIT 9313).